The primary structure comprises 483 residues: ATP-dependent RNA helicase DDX25 (483 aa).

T49 carries the post-translational modification Phosphothreonine. Residues 61 to 74 (LAANSLLNKLIRQS) carry the Nuclear export signal motif. A Q motif motif is present at residues 97 to 125 (KTFEELRLKEELLKGIYAMGFNRPSKIQE). The Nuclear localization signal signature appears at 100–114 (EELRLKEELLKGIYA). The Helicase ATP-binding domain maps to 130-300 (MMLAHPPQNL…ERIIPDPNVI (171 aa)). 143 to 150 (SQSGTGKT) contributes to the ATP binding site. A DEAD box motif is present at residues 247-250 (DEAD). A Helicase C-terminal domain is found at 311–478 (NIRQYYVLCE…QLDPEDMDEI (168 aa)).

Belongs to the DEAD box helicase family. Post-translationally, phosphorylated on threonine residues. The phosphorylated form is found in the cytoplasm but not in the nucleus. As to expression, isoform 1 is expressed in germ cells. Isoform 2 is highly expressed in Leydig cells and weakly expressed in the pituitary and hypothalamus. Isoform 3 is weakly expressed only in germ cells.

Its subcellular location is the cytoplasm. It localises to the nucleus. The catalysed reaction is ATP + H2O = ADP + phosphate + H(+). In terms of biological role, ATP-dependent RNA helicase. Required for mRNA export and translation regulation during spermatid development. This Rattus norvegicus (Rat) protein is ATP-dependent RNA helicase DDX25 (Ddx25).